Consider the following 228-residue polypeptide: Cytidylate kinase (228 aa).

12–20 contributes to the ATP binding site; sequence GPSGSGKGT.

It belongs to the cytidylate kinase family. Type 1 subfamily.

It localises to the cytoplasm. It carries out the reaction CMP + ATP = CDP + ADP. The catalysed reaction is dCMP + ATP = dCDP + ADP. The polypeptide is Cytidylate kinase (Pseudomonas putida (strain W619)).